A 146-amino-acid chain; its full sequence is Large ribosomal subunit protein bL19 (146 aa).

Residues 116–146 (ADRKRIDQDRAAERAAKEEAQKAQEPKASQE) form a disordered region. Positions 119–146 (KRIDQDRAAERAAKEEAQKAQEPKASQE) are enriched in basic and acidic residues.

In terms of assembly, part of the 50S risobomal subunit. Contacts protein L14. Forms a bridge to the 30S subunit in the 70S ribosome, contacting the 16S rRNA.

In terms of biological role, contacts the 16S rRNA of the 30S subunit (part of bridge B6), connecting the 2 subunits. In Thermus thermophilus (strain ATCC 27634 / DSM 579 / HB8), this protein is Large ribosomal subunit protein bL19 (rplS).